The sequence spans 787 residues: Serine/threonine-protein kinase PLK4 (787 aa).

Residues Tyr14–Met268 enclose the Protein kinase domain. ATP-binding positions include Leu20–Val28 and Lys43. The active-site Proton acceptor is the Asp139. The disordered stretch occupies residues Ser311 to Leu336. Positions Glu386–Lys505 constitute a Cryptic POLO box 1 (CPB1) domain. A Cryptic POLO box 2 (CPB2) domain is found at Thr506–His613. Positions Pro675–Cys755 constitute a POLO box domain.

Belongs to the protein kinase superfamily. Ser/Thr protein kinase family. CDC5/Polo subfamily. Homodimer. Ubiquitinated by the SCF(Slimb) ubiquitin ligase complex; leading to its degradation by the proteasome during interphase and regulating centriole number and ensuring the block to centriole reduplication.

It is found in the cytoplasm. The protein resides in the cytoskeleton. Its subcellular location is the microtubule organizing center. The protein localises to the centrosome. It localises to the centriole. The enzyme catalyses L-seryl-[protein] + ATP = O-phospho-L-seryl-[protein] + ADP + H(+). It carries out the reaction L-threonyl-[protein] + ATP = O-phospho-L-threonyl-[protein] + ADP + H(+). Serine/threonine-protein kinase that plays a central role in centriole duplication. Able to trigger procentriole formation on the surface of the mother centriole cylinder, using mother centriole as a platform, leading to the recruitment of centriole biogenesis proteins such as sas-6. When overexpressed, it is able to induce centrosome amplification through the simultaneous generation of multiple procentrioles adjoining each parental centriole during S phase. Centrosome amplification following overexpression can initiate tumorigenesis, highlighting the importance of centrosome regulation in cancers. The chain is Serine/threonine-protein kinase PLK4 (SAK) from Drosophila willistoni (Fruit fly).